The chain runs to 233 residues: Large ribosomal subunit protein uL1 (233 aa).

It belongs to the universal ribosomal protein uL1 family. In terms of assembly, part of the 50S ribosomal subunit.

Functionally, binds directly to 23S rRNA. The L1 stalk is quite mobile in the ribosome, and is involved in E site tRNA release. Its function is as follows. Protein L1 is also a translational repressor protein, it controls the translation of the L11 operon by binding to its mRNA. The sequence is that of Large ribosomal subunit protein uL1 from Polynucleobacter asymbioticus (strain DSM 18221 / CIP 109841 / QLW-P1DMWA-1) (Polynucleobacter necessarius subsp. asymbioticus).